We begin with the raw amino-acid sequence, 79 residues long: MARVTVEDCLEKVPNRFALVLMVAKRAKQLLKGAEATVSTRSNKYIVSSLREVAMGNVGYQDSLDANEAIRQIEKDLNK.

This sequence belongs to the RNA polymerase subunit omega family. The RNAP catalytic core consists of 2 alpha, 1 beta, 1 beta' and 1 omega subunit. When a sigma factor is associated with the core the holoenzyme is formed, which can initiate transcription.

It carries out the reaction RNA(n) + a ribonucleoside 5'-triphosphate = RNA(n+1) + diphosphate. Its function is as follows. Promotes RNA polymerase assembly. Latches the N- and C-terminal regions of the beta' subunit thereby facilitating its interaction with the beta and alpha subunits. This chain is DNA-directed RNA polymerase subunit omega, found in Bdellovibrio bacteriovorus (strain ATCC 15356 / DSM 50701 / NCIMB 9529 / HD100).